The chain runs to 224 residues: MKHLDRLQHKIGYEFSNLTLLKQALTHRSAAKVHNERLEFLGDAILNLTIGEALYLQFPHCNEGELSRMRATLVREKTLAELAHQFDLGNYMALGAGELKSGGFRRASILADCVEAIIGAMSLDSNLPKTMEIVRRWYEVLLRDIQPGENQKDPKTRLQEYLQGKRLALPAYNVTDIQGEAHCQTFTVECHVENLDRTFVGVAGSRRKAEQVAAEQILKVLDIK.

In terms of domain architecture, RNase III spans 4–126 (LDRLQHKIGY…IIGAMSLDSN (123 aa)). Glutamate 39 is a binding site for Mg(2+). The active site involves aspartate 43. Residues aspartate 112 and glutamate 115 each coordinate Mg(2+). Residue glutamate 115 is part of the active site. Residues 153 to 223 (DPKTRLQEYL…AEQILKVLDI (71 aa)) enclose the DRBM domain.

The protein belongs to the ribonuclease III family. As to quaternary structure, homodimer. Mg(2+) is required as a cofactor.

The protein resides in the cytoplasm. It catalyses the reaction Endonucleolytic cleavage to 5'-phosphomonoester.. Its function is as follows. Digests double-stranded RNA. Involved in the processing of primary rRNA transcript to yield the immediate precursors to the large and small rRNAs (23S and 16S). Processes some mRNAs, and tRNAs when they are encoded in the rRNA operon. Processes pre-crRNA and tracrRNA of type II CRISPR loci if present in the organism. This is Ribonuclease 3 from Actinobacillus succinogenes (strain ATCC 55618 / DSM 22257 / CCUG 43843 / 130Z).